Reading from the N-terminus, the 229-residue chain is 2,3-bisphosphoglycerate-dependent phosphoglycerate mutase (229 aa).

Substrate is bound by residues 8-15 (RHGKSEWN), 21-22 (TG), Arg60, 87-90 (ERHY), Lys98, 114-115 (RR), and 183-184 (GN). Residue His9 is the Tele-phosphohistidine intermediate of the active site. Catalysis depends on Glu87, which acts as the Proton donor/acceptor.

It belongs to the phosphoglycerate mutase family. BPG-dependent PGAM subfamily. In terms of assembly, homodimer.

It carries out the reaction (2R)-2-phosphoglycerate = (2R)-3-phosphoglycerate. It participates in carbohydrate degradation; glycolysis; pyruvate from D-glyceraldehyde 3-phosphate: step 3/5. Functionally, catalyzes the interconversion of 2-phosphoglycerate and 3-phosphoglycerate. The chain is 2,3-bisphosphoglycerate-dependent phosphoglycerate mutase from Nautilia profundicola (strain ATCC BAA-1463 / DSM 18972 / AmH).